The following is a 1533-amino-acid chain: Protein TALPID3 (1533 aa).

The interval 32–57 (LSANKRLPVGTGTSLNGTSRGSSDLT) is disordered. The segment covering 42–57 (TGTSLNGTSRGSSDLT) has biased composition (polar residues). Residues 182-223 (QSDLEAKVNSVTELLSKLQETDKHLQRVTEQQTSIQRKQEKL) adopt a coiled-coil conformation. The span at 309–321 (KEVEDTSFDKQKS) shows a compositional bias: basic and acidic residues. Disordered regions lie at residues 309–339 (KEVE…VSRD) and 377–400 (LTRK…TPEK). At Ser-406 the chain carries Phosphoserine. A coiled-coil region spans residues 467-501 (SVLKDAEKILRGVQNNKKVLEENLEAIIRAKDGAA). The interval 467 to 554 (SVLKDAEKIL…YEQKRFDQKN (88 aa)) is required for centrosomal localization. Positions 546 to 575 (EQKRFDQKNQRTKKGQNMTKDIRTNTQDKT) are disordered. The segment covering 560 to 575 (GQNMTKDIRTNTQDKT) has biased composition (polar residues). A phosphothreonine mark is found at Thr-1042 and Thr-1046. Phosphoserine is present on Ser-1050. Thr-1063 carries the post-translational modification Phosphothreonine. Ser-1066 carries the phosphoserine modification. Residues 1129-1156 (SSPELPKPWGDGDLPLEEENPNSPQEEL) are disordered.

It belongs to the TALPID3 family. As to quaternary structure, interacts with CCP110, CEP290, CEP97, KIF24. Ubiquitously expressed. Expressed in photoreceptor cells (at protein level).

The protein resides in the cytoplasm. The protein localises to the cytoskeleton. It is found in the microtubule organizing center. It localises to the centrosome. Its subcellular location is the photoreceptor inner segment. The protein resides in the centriole. The protein localises to the cilium basal body. Required for ciliogenesis and sonic hedgehog/SHH signaling. Required for the centrosomal recruitment of RAB8A and for the targeting of centriole satellite proteins to centrosomes such as of PCM1. May play a role in early ciliogenesis in the disappearance of centriolar satellites that preceeds ciliary vesicle formation. Involved in regulation of cell intracellular organization. Involved in regulation of cell polarity. Required for asymmetrical localization of CEP120 to daughter centrioles. The polypeptide is Protein TALPID3 (KIAA0586) (Homo sapiens (Human)).